A 357-amino-acid polypeptide reads, in one-letter code: Alanine racemase (357 aa).

K33 (proton acceptor; specific for D-alanine) is an active-site residue. N6-(pyridoxal phosphate)lysine is present on K33. R130 contacts substrate. Y252 acts as the Proton acceptor; specific for L-alanine in catalysis. M300 serves as a coordination point for substrate.

Belongs to the alanine racemase family. Pyridoxal 5'-phosphate serves as cofactor.

The enzyme catalyses L-alanine = D-alanine. It participates in amino-acid biosynthesis; D-alanine biosynthesis; D-alanine from L-alanine: step 1/1. In terms of biological role, catalyzes the interconversion of L-alanine and D-alanine. May also act on other amino acids. In Acidiphilium cryptum (strain JF-5), this protein is Alanine racemase (alr).